A 167-amino-acid polypeptide reads, in one-letter code: Ubiquitin-fold modifier-conjugating enzyme 1 (167 aa).

Residue C116 is the Glycyl thioester intermediate of the active site. K122 participates in a covalent cross-link: Glycyl lysine isopeptide (Lys-Gly) (interchain with G-Cter in UFM1).

Belongs to the ubiquitin-conjugating enzyme family. UFC1 subfamily. In terms of assembly, interacts with UBA5 (via C-terminus). Interacts with UFL1. Interacts with UFM1. Interacts with KIRREL3. Post-translationally, ufmylated at Lys-122. Deufmylated by UFSP1.

E2-like enzyme which specifically catalyzes the second step in ufmylation. Accepts the ubiquitin-like modifier UFM1 from the E1 enzyme UBA5 and forms an intermediate with UFM1 via a thioester linkage. Ufmylation is involved in various processes, such as ribosome recycling, response to DNA damage, interferon response or reticulophagy (also called ER-phagy). This chain is Ubiquitin-fold modifier-conjugating enzyme 1, found in Bos taurus (Bovine).